The chain runs to 141 residues: UPF0225 protein Rmet_0111 (141 aa).

It belongs to the UPF0225 family.

The sequence is that of UPF0225 protein Rmet_0111 from Cupriavidus metallidurans (strain ATCC 43123 / DSM 2839 / NBRC 102507 / CH34) (Ralstonia metallidurans).